A 302-amino-acid chain; its full sequence is Homoserine O-acetyltransferase (302 aa).

The active-site Acyl-thioester intermediate is the Cys-142. Lys-163 and Ser-192 together coordinate substrate. The Proton acceptor role is filled by His-235. The active site involves Glu-237. Arg-249 provides a ligand contact to substrate.

It belongs to the MetA family.

The protein localises to the cytoplasm. The catalysed reaction is L-homoserine + acetyl-CoA = O-acetyl-L-homoserine + CoA. The protein operates within amino-acid biosynthesis; L-methionine biosynthesis via de novo pathway; O-acetyl-L-homoserine from L-homoserine: step 1/1. Its function is as follows. Transfers an acetyl group from acetyl-CoA to L-homoserine, forming acetyl-L-homoserine. The protein is Homoserine O-acetyltransferase of Geobacillus kaustophilus (strain HTA426).